Consider the following 253-residue polypeptide: Flagellar brake protein YcgR (253 aa).

In terms of domain architecture, PilZ spans 120–239 (QRRDFYRFAT…NEGLINRYVY (120 aa)).

The protein belongs to the YcgR family. Monomer. Interacts with the flagellar basal bodies.

It localises to the bacterial flagellum basal body. Acts as a flagellar brake, regulating swimming and swarming in a bis-(3'-5') cyclic diguanylic acid (c-di-GMP)-dependent manner. Binds 1 c-di-GMP dimer per subunit. Increasing levels of c-di-GMP lead to decreased motility. In Methylotenera mobilis (strain JLW8 / ATCC BAA-1282 / DSM 17540), this protein is Flagellar brake protein YcgR.